Reading from the N-terminus, the 520-residue chain is Cyclic AMP-responsive element-binding protein 3-like protein 2 (520 aa).

Residues 1–379 (MEVLESGEQG…KLAGTQTGTC (379 aa)) lie on the Cytoplasmic side of the membrane. The residue at position 93 (serine 93) is a Phosphoserine. Residue lysine 178 forms a Glycyl lysine isopeptide (Lys-Gly) (interchain with G-Cter in SUMO2) linkage. Serine 191 is modified (phosphoserine). A disordered region spans residues 195–264 (APVDHLHLPP…PHKLQGSGPL (70 aa)). Low complexity-rich tracts occupy residues 208–220 (SSHG…SLSP) and 234–255 (SPSR…LTAP). Residues 294–357 (ALKKIRRKIK…RTLLQQLQKL (64 aa)) form the bZIP domain. Residues 296–325 (KKIRRKIKNKISAQESRRKKKEYMDSLEKK) are basic motif. Residues 336–357 (LRKKVEVLENTNRTLLQQLQKL) are leucine-zipper. Residues 380–400 (LMVVVLCFAVAFGSFFQGYGP) traverse the membrane as a helical; Signal-anchor for type II membrane protein segment. The Lumenal portion of the chain corresponds to 401–520 (YPSATKMALP…ELDRRVNTTF (120 aa)). The S1P recognition signature appears at 427–430 (RNLL). Asparagine 480, asparagine 504, and asparagine 517 each carry an N-linked (GlcNAc...) asparagine glycan.

It belongs to the bZIP family. ATF subfamily. Binds DNA as a dimer. In terms of processing, upon ER stress, translocated to the Golgi apparatus, where it is processed by regulated intramembrane proteolysis (RIP) to release the cytosol-facing N-terminal transcription factor domain. The cleavage is performed sequentially by site-1 and site-2 proteases (S1P/MBTPS1 and S2P/MBTPS2). N-glycosylated. Post-translationally, ubiquitinated by HRD1/SYVN1; undergoes 'Lys-48'-linked ubiquitination, followed by rapid proteasomal degradation under normal conditions. Upon ER stress, SYVN1 E3 ubiquitin-protein ligase dissociates from its substrate, ubiquitination does not occur and CREB3L2 is stabilized. Widely expressed with highest levels in placenta, lung, spleen and intestine, and lowest levels in heart, brain, skeletal muscle, thymus, colon and leukocytes. In fetal tissues, the weakest expression is detected in brain and heart.

The protein resides in the endoplasmic reticulum membrane. It is found in the nucleus. Functionally, transcription factor involved in unfolded protein response (UPR). In the absence of endoplasmic reticulum (ER) stress, inserted into ER membranes, with N-terminal DNA-binding and transcription activation domains oriented toward the cytosolic face of the membrane. In response to ER stress, transported to the Golgi, where it is cleaved in a site-specific manner by resident proteases S1P/MBTPS1 and S2P/MBTPS2. The released N-terminal cytosolic domain is translocated to the nucleus to effect transcription of specific target genes. Plays a critical role in chondrogenesis by activating the transcription of SEC23A, which promotes the transport and secretion of cartilage matrix proteins, and possibly that of ER biogenesis-related genes. In a neuroblastoma cell line, protects cells from ER stress-induced death. In vitro activates transcription of target genes via direct binding to the CRE site. The protein is Cyclic AMP-responsive element-binding protein 3-like protein 2 (CREB3L2) of Homo sapiens (Human).